The following is a 251-amino-acid chain: Probable transcriptional regulatory protein PMI1113 (251 aa).

This sequence belongs to the TACO1 family.

The protein resides in the cytoplasm. This Proteus mirabilis (strain HI4320) protein is Probable transcriptional regulatory protein PMI1113.